The chain runs to 921 residues: Collagen alpha-1(IX) chain (921 aa).

The signal sequence occupies residues Met1–Ala23. The nonhelical region (NC4) stretch occupies residues Thr24 to Arg268. Intrachain disulfides connect Cys44/Cys242 and Cys198/Cys252. One can recognise a Laminin G-like domain in the interval Gly50–Pro244. Residues Asp213, Asp215, and His253 each coordinate Zn(2+). 2 disordered regions span residues His253 to Asp759 and Arg783 to Lys921. 8 Collagen-like domains span residues Gly269–Asp325, Gly326–Gly356, Gly358–Gly403, Pro416–Gly472, Ile473–Glu512, Gly604–Pro656, Pro657–Pro711, and Gly712–Arg755. The segment at Gly269–His405 is triple-helical region (COL3). Composition is skewed to pro residues over residues Glu273–Val285 and Lys298–Pro310. Over residues Thr368 to Asp383 the composition is skewed to low complexity. Positions Arg387–Pro398 are enriched in pro residues. Positions Asp406–Pro417 are nonhelical region (NC3). Residues Gly418–Ala756 form a triple-helical region (COL2) region. The segment covering Asp479 to Asp489 has biased composition (basic and acidic residues). Composition is skewed to low complexity over residues Pro594–Pro632 and Pro639–Leu650. The tract at residues Pro757–Thr786 is nonhelical region (NC2). The tract at residues Gly787–Cys901 is triple-helical region (COL1). The Collagen-like 9 domain maps to Gly790–Gly847. Over residues Arg794–Pro804 the composition is skewed to pro residues. Positions Pro833–Pro845 are enriched in basic and acidic residues. The span at Val888–Phe900 shows a compositional bias: pro residues. The segment at Glu902–Lys921 is nonhelical region (NC1).

Belongs to the fibril-associated collagens with interrupted helices (FACIT) family. As to quaternary structure, heterotrimer of an alpha 1(IX), an alpha 2(IX) and an alpha 3(IX) chain. Covalently linked to the telopeptides of type II collagen by lysine-derived cross-links. In terms of processing, prolines at the third position of the tripeptide repeating unit (G-X-Y) are hydroxylated in some or all of the chains.

The protein resides in the secreted. The protein localises to the extracellular space. It localises to the extracellular matrix. Functionally, structural component of hyaline cartilage and vitreous of the eye. The polypeptide is Collagen alpha-1(IX) chain (Col9a1) (Mus musculus (Mouse)).